Consider the following 441-residue polypeptide: D-inositol 3-phosphate glycosyltransferase (441 aa).

Histidine 38 provides a ligand contact to 1D-myo-inositol 3-phosphate. UDP-N-acetyl-alpha-D-glucosamine-binding positions include 44-45 (QP) and glycine 52. 1D-myo-inositol 3-phosphate is bound by residues 49 to 54 (DAGGMN), lysine 107, tyrosine 140, threonine 164, and arginine 184. The UDP-N-acetyl-alpha-D-glucosamine site is built by arginine 258, lysine 263, and glutamine 316. Residues phenylalanine 325, glutamine 326, and alanine 328 each coordinate Mg(2+). Glutamate 338 and glutamate 346 together coordinate UDP-N-acetyl-alpha-D-glucosamine. Threonine 352 contacts Mg(2+).

It belongs to the glycosyltransferase group 1 family. MshA subfamily. Homodimer.

The catalysed reaction is 1D-myo-inositol 3-phosphate + UDP-N-acetyl-alpha-D-glucosamine = 1D-myo-inositol 2-acetamido-2-deoxy-alpha-D-glucopyranoside 3-phosphate + UDP + H(+). Functionally, catalyzes the transfer of a N-acetyl-glucosamine moiety to 1D-myo-inositol 3-phosphate to produce 1D-myo-inositol 2-acetamido-2-deoxy-glucopyranoside 3-phosphate in the mycothiol biosynthesis pathway. This is D-inositol 3-phosphate glycosyltransferase from Mycolicibacterium paratuberculosis (strain ATCC BAA-968 / K-10) (Mycobacterium paratuberculosis).